Reading from the N-terminus, the 180-residue chain is MMFSSIDSLLKISTSSQNEDQKLESHPSPPSQIPNYSTSCSEELMKMAAKAAQFAAQASLENSFSSSTSPTSTVTPLSAYTSLVQPVLPLIYDHLALTYSVNAWQAWGKMRRPRTAFSSEQLVQLEKQFSDNRYLSRPRRYQLAQQLSLSETQIKIWFQNRRMKNKRCPSSTPIQSTSSS.

The tract at residues 15 to 37 (SSQNEDQKLESHPSPPSQIPNYS) is disordered. Residues 110–169 (MRRPRTAFSSEQLVQLEKQFSDNRYLSRPRRYQLAQQLSLSETQIKIWFQNRRMKNKRCP) constitute a DNA-binding region (homeobox).

As to expression, expressed in VB motor neurons in the ventral nerve cord.

The protein localises to the nucleus. Functionally, transcription factor. Plays a role, downstream from homeobox protein unc-4 and Wnt signaling, in specifying synaptic inputs to A-class motor neurons. Involved in patterning of the synaptic outputs of the postmitotic DA class cholinergic motor neurons. The protein is Homeobox protein ceh-12 (ceh-12) of Caenorhabditis elegans.